The sequence spans 71 residues: Large ribosomal subunit protein bL31 (71 aa).

Cysteine 16, cysteine 18, cysteine 37, and cysteine 40 together coordinate Zn(2+).

Belongs to the bacterial ribosomal protein bL31 family. Type A subfamily. In terms of assembly, part of the 50S ribosomal subunit. Zn(2+) is required as a cofactor.

Its function is as follows. Binds the 23S rRNA. This chain is Large ribosomal subunit protein bL31, found in Actinobacillus succinogenes (strain ATCC 55618 / DSM 22257 / CCUG 43843 / 130Z).